The sequence spans 194 residues: NADH-quinone oxidoreductase subunit B (194 aa).

The [4Fe-4S] cluster site is built by C72, C73, C137, and C167.

This sequence belongs to the complex I 20 kDa subunit family. As to quaternary structure, NDH-1 is composed of 14 different subunits. Subunits NuoB, C, D, E, F, and G constitute the peripheral sector of the complex. It depends on [4Fe-4S] cluster as a cofactor.

The protein resides in the cell inner membrane. It catalyses the reaction a quinone + NADH + 5 H(+)(in) = a quinol + NAD(+) + 4 H(+)(out). Functionally, NDH-1 shuttles electrons from NADH, via FMN and iron-sulfur (Fe-S) centers, to quinones in the respiratory chain. Couples the redox reaction to proton translocation (for every two electrons transferred, four hydrogen ions are translocated across the cytoplasmic membrane), and thus conserves the redox energy in a proton gradient. The polypeptide is NADH-quinone oxidoreductase subunit B (Granulibacter bethesdensis (strain ATCC BAA-1260 / CGDNIH1)).